The primary structure comprises 268 residues: Mediator of RNA polymerase II transcription subunit 18 (268 aa).

Belongs to the Mediator complex subunit 18 family. As to quaternary structure, component of the Mediator complex.

It localises to the nucleus. Component of the Mediator complex, a coactivator involved in the regulated transcription of nearly all RNA polymerase II-dependent genes. Mediator functions as a bridge to convey information from gene-specific regulatory proteins to the basal RNA polymerase II transcription machinery. Mediator is recruited to promoters by direct interactions with regulatory proteins and serves as a scaffold for the assembly of a functional preinitiation complex with RNA polymerase II and the general transcription factors. In Neosartorya fischeri (strain ATCC 1020 / DSM 3700 / CBS 544.65 / FGSC A1164 / JCM 1740 / NRRL 181 / WB 181) (Aspergillus fischerianus), this protein is Mediator of RNA polymerase II transcription subunit 18 (srb5).